Here is a 608-residue protein sequence, read N- to C-terminus: MSTHESADQAGTPQYGTAHSAASAAPHYSAAFGATSLPGSQPVSAQEYDAVLRRLSAAEATRDNMSRQIRGAGEKNRKLVEAITSMRYQVERLRASLSQNVMPPLNSAIVLAVHEGQTMTYEQVADDKTPAEIDTYLDVQVSGRMMRIPVSPLIDLSTLTPGMTVLLNDKTEAVLALDTEPFGDVVTVREVLDEQRVLVDTSSGAQQVARVAGSLNIEQLRTGDAVTLDTRTRMLTSQVPASRSQELVLEEIPDVTYEQIGGLGAQIEQIRDAVELPYLHPEIFERYHLAPPKGILLYGPPGNGKTMIAKAVANSLAARAAALNPGSATRGYFLNIKGPELLDKFVGETERQIRDIFVAAREKAEAGHPVVVFFDEMESLFRMRGSGRSSDIETTIVPQLLAEIDGVESLQNVIVIGATNREDLIDAAVMRPGRLDLKIRINRPDAAGAAEIFGLYLTEDLPLDATEVAAAGSTRAALTAMIAAAAGQLYARTPSTAYAVATVDSSMVVGSGASANLSTHTLYRGDFASGAVIRNIVDRAKKAAIKEQLQALTAGADASSVGIGTRHLLEAVRAEFEDQVDLPPLPDIEDALTVAGVRGRLVSVEPPR.

Residues 45–79 are a coiled coil; that stretch reads AQEYDAVLRRLSAAEATRDNMSRQIRGAGEKNRKL. 302 to 307 serves as a coordination point for ATP; sequence GNGKTM.

It belongs to the AAA ATPase family. Homohexamer. Assembles into a hexameric ring structure.

This is AAA ATPase forming ring-shaped complexes from Rothia mucilaginosa (strain DY-18) (Stomatococcus mucilaginosus).